We begin with the raw amino-acid sequence, 717 residues long: Glutamine--fructose-6-phosphate aminotransferase [isomerizing] (717 aa).

The active-site For GATase activity is Cys2. The 317-residue stretch at 2–318 (CGIFGYCNYL…DDDLAHIYDG (317 aa)) folds into the Glutamine amidotransferase type-2 domain. At Ser253 the chain carries Phosphoserine. Phosphothreonine is present on Thr334. A Phosphoserine modification is found at Ser336. SIS domains are found at residues 390–529 (WLPV…DRVS) and 562–707 (CATE…VDFP).

It carries out the reaction D-fructose 6-phosphate + L-glutamine = D-glucosamine 6-phosphate + L-glutamate. It functions in the pathway nucleotide-sugar biosynthesis; UDP-N-acetyl-alpha-D-glucosamine biosynthesis; alpha-D-glucosamine 6-phosphate from D-fructose 6-phosphate: step 1/1. Functionally, involved in amino sugar synthesis (formation of chitin, supplies the amino sugars of asparagine-linked oligosaccharides of glycoproteins). This is Glutamine--fructose-6-phosphate aminotransferase [isomerizing] (GFA1) from Saccharomyces cerevisiae (strain ATCC 204508 / S288c) (Baker's yeast).